The sequence spans 423 residues: COP9 signalosome complex subunit 3 (423 aa).

Residues 197 to 365 form the PCI domain; that stretch reads NFERALYFFE…GMVCFHDNPE (169 aa). Positions 402 to 423 are disordered; it reads QFVQKSMGTQEDDVGSKTSSYS.

The protein belongs to the CSN3 family. In terms of assembly, component of the CSN complex, probably composed of cops1, cops2, cops3, cops4, cops5, cops6, cops7, cops8 and cops9.

It is found in the cytoplasm. The protein localises to the nucleus. Functionally, component of the COP9 signalosome complex (CSN), a complex involved in various cellular and developmental processes. The CSN complex is an essential regulator of the ubiquitin (Ubl) conjugation pathway by mediating the deneddylation of the cullin subunits of E3 ligase complexes, leading to modify the Ubl ligase activity. In Danio rerio (Zebrafish), this protein is COP9 signalosome complex subunit 3 (cops3).